The primary structure comprises 109 residues: Small ribosomal subunit protein uS10 (109 aa).

This sequence belongs to the universal ribosomal protein uS10 family. As to quaternary structure, part of the 30S ribosomal subunit.

Involved in the binding of tRNA to the ribosomes. This Wolbachia pipientis wMel protein is Small ribosomal subunit protein uS10.